We begin with the raw amino-acid sequence, 269 residues long: Pyrroline-5-carboxylate reductase (269 aa).

It belongs to the pyrroline-5-carboxylate reductase family.

It is found in the cytoplasm. It catalyses the reaction L-proline + NADP(+) = (S)-1-pyrroline-5-carboxylate + NADPH + 2 H(+). The enzyme catalyses L-proline + NAD(+) = (S)-1-pyrroline-5-carboxylate + NADH + 2 H(+). It functions in the pathway amino-acid biosynthesis; L-proline biosynthesis; L-proline from L-glutamate 5-semialdehyde: step 1/1. Its activity is regulated as follows. Inhibited by p-chloromercuribenzoate. Its function is as follows. Catalyzes the reduction of 1-pyrroline-5-carboxylate (PCA) to L-proline. Does not catalyze the reverse reaction. In Escherichia coli (strain K12), this protein is Pyrroline-5-carboxylate reductase.